The sequence spans 139 residues: Large ribosomal subunit protein uL13c (139 aa).

The protein belongs to the universal ribosomal protein uL13 family. In terms of assembly, part of the 50S ribosomal subunit.

It is found in the plastid. It localises to the chloroplast. In Trieres chinensis (Marine centric diatom), this protein is Large ribosomal subunit protein uL13c.